Reading from the N-terminus, the 895-residue chain is Putative endoplasmic reticulum metallopeptidase 1-A (895 aa).

The segment at 1-30 is disordered; sequence MLRRRGGPNELRDELNNSKNQPEDDQRTKR. Over 1–34 the chain is Cytoplasmic; sequence MLRRRGGPNELRDELNNSKNQPEDDQRTKRGRES. Positions 10–30 are enriched in basic and acidic residues; that stretch reads ELRDELNNSKNQPEDDQRTKR. A helical membrane pass occupies residues 35–55; it reads IGFRHWIYFVLTVAIVYAGVV. The Lumenal portion of the chain corresponds to 56–383; it reads ALHRKMPAVR…VVGLFTVYYS (328 aa). Residues histidine 174 and aspartate 186 each contribute to the Zn(2+) site. Glutamate 220 functions as the Proton acceptor in the catalytic mechanism. Zn(2+) contacts are provided by glutamate 221, glutamate 247, and histidine 323. Residues 384–404 form a helical membrane-spanning segment; sequence VNVGKLLNYIACFATYFLVVL. Residues 405-423 are Cytoplasmic-facing; sequence RIRNRLYSVGDLAIAFKHH. Residues 424 to 444 form a helical membrane-spanning segment; the sequence is VVAFLAMVITMLLIIAFVVQM. At 445–452 the chain is on the lumenal side; sequence DLVMCWYK. Residues 453 to 473 form a helical membrane-spanning segment; that stretch reads MPEIVGALYVLPMLIAGAIVH. Over 474 to 492 the chain is Cytoplasmic; the sequence is SHYADNNRIRNVEMVQYDT. The helical transmembrane segment at 493 to 513 threads the bilayer; it reads ILLSFASILFLMTFYNLSSAF. Over 514–517 the chain is Lumenal; it reads YVLN. Residues 518 to 538 traverse the membrane as a helical segment; it reads NLILPVFKDIIIWALGLFGVI. Residues 539 to 544 are Cytoplasmic-facing; it reads RRVTPR. A helical membrane pass occupies residues 545–565; sequence VLFFTQLFCFLPTFVFAAYAI. Residues 566–586 are Lumenal-facing; the sequence is SQCVDFFVPVMGRLGNAINPE. A helical membrane pass occupies residues 587-607; the sequence is FIMGPLGLVIASGFILFVNNL. Over 608 to 613 the chain is Cytoplasmic; that stretch reads FYISRR. A helical transmembrane segment spans residues 614–634; the sequence is MNYIIRLLFAIFALFILVLIT. Residues 635 to 895 lie on the Lumenal side of the membrane; sequence TKVGNPYEYS…GRSEIVVKIF (261 aa). N-linked (GlcNAc...) asparagine glycosylation is found at asparagine 659, asparagine 702, and asparagine 758.

This sequence belongs to the peptidase M28 family. The cofactor is Zn(2+).

It localises to the endoplasmic reticulum membrane. This is Putative endoplasmic reticulum metallopeptidase 1-A from Caenorhabditis elegans.